We begin with the raw amino-acid sequence, 735 residues long: Peroxisomal multifunctional enzyme type 2 (735 aa).

Residues 1 to 305 form a (3R)-hydroxyacyl-CoA dehydrogenase region; sequence MASPLRFDGR…IEVLHKIDSE (305 aa). NAD(+) contacts are provided by residues 16 to 40, Leu21, and Asp40; that span reads GAGGGLGRAYALAFAERGALVVVND. N6-acetyllysine; alternate is present on Lys46. Lys46 is subject to N6-succinyllysine; alternate. Phosphoserine is present on Ser52. Lys57 and Lys68 each carry N6-succinyllysine. 75 to 76 is a binding site for NAD(+); the sequence is SV. Position 84 is an N6-succinyllysine (Lys84). Position 99 (Asn99) interacts with NAD(+). Position 151 (Ser151) interacts with substrate. Residue Tyr164 is the Proton acceptor of the active site. Residues 164-168 and 196-199 each bind NAD(+); these read YSAAK and AGSR. At Thr265 the chain carries Phosphothreonine. Lys275 is subject to N6-succinyllysine. Phosphoserine occurs at positions 304 and 308. The segment at 321–621 is enoyl-CoA hydratase 2; the sequence is SGFAGVVGHK…AQTPSEGGAL (301 aa). Lys355 bears the N6-succinyllysine mark. Position 405–406 (405–406) interacts with (3R)-3-hydroxydecanoyl-CoA; the sequence is HG. Lys423 is subject to N6-succinyllysine. Residues Lys434, 509–514, Gly532, and Phe562 contribute to the (3R)-3-hydroxydecanoyl-CoA site; that span reads DSNPLH. The region spanning 483-599 is the MaoC-like domain; the sequence is VPSRPPDAVL…QETGDIVISN (117 aa). The residue at position 564 (Lys564) is an N6-acetyllysine. 2 positions are modified to N6-succinyllysine: Lys578 and Lys662. In terms of domain architecture, SCP2 spans 623–735; that stretch reads SALVFGEIGR…QMILKDYAKL (113 aa). Lys668 is subject to N6-acetyllysine. Substrate is bound by residues Gln705 and Gln723. An N6-succinyllysine modification is found at Lys724. The Microbody targeting signal motif lies at 733 to 735; it reads AKL.

Belongs to the short-chain dehydrogenases/reductases (SDR) family. Homodimer.

It localises to the peroxisome. It catalyses the reaction a (3R)-3-hydroxyacyl-CoA + NAD(+) = a 3-oxoacyl-CoA + NADH + H(+). The catalysed reaction is (24R,25R)-3alpha,7alpha,12alpha,24-tetrahydroxy-5beta-cholestan-26-oyl-CoA = (24E)-3alpha,7alpha,12alpha-trihydroxy-5beta-cholest-24-en-26-oyl-CoA + H2O. The enzyme catalyses a (3R)-3-hydroxyacyl-CoA = a (2E)-enoyl-CoA + H2O. It carries out the reaction (2E)-octenoyl-CoA + H2O = (3R)-hydroxyoctanoyl-CoA. It catalyses the reaction (3R)-hydroxyoctanoyl-CoA + NAD(+) = 3-oxooctanoyl-CoA + NADH + H(+). The catalysed reaction is (3R)-hydroxyhexadecanoyl-CoA + NAD(+) = 3-oxohexadecanoyl-CoA + NADH + H(+). The enzyme catalyses (2E)-hexadecenedioyl-CoA + H2O = (3R)-hydroxyhexadecanedioyl-CoA. It carries out the reaction (3R)-hydroxyhexadecanedioyl-CoA + NAD(+) = 3-oxohexadecanedioyl-CoA + NADH + H(+). It catalyses the reaction (3R)-hydroxyhexadecanoyl-CoA = (2E)-hexadecenoyl-CoA + H2O. The catalysed reaction is (3R)-3-hydroxydecanoyl-CoA = (2E)-decenoyl-CoA + H2O. The enzyme catalyses (3R)-3-hydroxydecanoyl-CoA + NAD(+) = 3-oxodecanoyl-CoA + NADH + H(+). It carries out the reaction (24R,25R)-3alpha,7alpha,12alpha,24-tetrahydroxy-5beta-cholestan-26-oyl-CoA + NAD(+) = 3alpha,7alpha,12alpha-trihydroxy-24-oxo-5beta-cholestan-26-oyl-CoA + NADH + H(+). The protein operates within lipid metabolism; fatty acid beta-oxidation. Its function is as follows. Bifunctional enzyme acting on the peroxisomal fatty acid beta-oxidation pathway. Catalyzes two of the four reactions in fatty acid degradation: hydration of 2-enoyl-CoA (trans-2-enoyl-CoA) to produce (3R)-3-hydroxyacyl-CoA, and dehydrogenation of (3R)-3-hydroxyacyl-CoA to produce 3-ketoacyl-CoA (3-oxoacyl-CoA), which is further metabolized by SCPx. Can use straight-chain and branched-chain fatty acids, as well as bile acid intermediates as substrates. The chain is Peroxisomal multifunctional enzyme type 2 from Rattus norvegicus (Rat).